Reading from the N-terminus, the 440-residue chain is Serine protease inhibitor A3G (440 aa).

The interval 357–382 (GTEAAAATGMAGVGCCAVFDFLEIFF) is RCL.

Belongs to the serpin family. As to expression, expressed in bone marrow (particularly hematopoietic stem cells), heart, kidney, liver, lung, skeletal muscle, spleen, testis, thymus and T-cells.

It localises to the cytoplasm. The protein resides in the nucleus. In terms of biological role, serine and cysteine protease inhibitor. Can inhibit lysosomal papain-like proteases including the cathepsins B, G, H, K, L and V. Ineffective against elastase, granzyme A, granzyme B, or caspases 3, 8 or 9. Inhibition of cytoplasmic cathepsin B following release from the lysosome may protect cells from apoptosis. This may facilitate the survival of progenitor T-cells and the subsequent development of long term memory CD8 T-cells. This chain is Serine protease inhibitor A3G (Serpina3g), found in Mus musculus (Mouse).